The primary structure comprises 446 residues: uncharacterized protein (446 aa).

The next 4 membrane-spanning stretches (helical) occupy residues 69–89 (FWLW…VTYL), 98–118 (FFLV…VWLA), 169–189 (HSLW…LLLV), and 247–267 (GLLV…AWVV).

The protein localises to the membrane. This is an uncharacterized protein from Neisseria meningitidis serogroup B (strain ATCC BAA-335 / MC58).